Here is a 359-residue protein sequence, read N- to C-terminus: Phosphoribosylformylglycinamidine cyclo-ligase (359 aa).

This sequence belongs to the AIR synthase family.

The protein localises to the cytoplasm. The catalysed reaction is 2-formamido-N(1)-(5-O-phospho-beta-D-ribosyl)acetamidine + ATP = 5-amino-1-(5-phospho-beta-D-ribosyl)imidazole + ADP + phosphate + H(+). Its pathway is purine metabolism; IMP biosynthesis via de novo pathway; 5-amino-1-(5-phospho-D-ribosyl)imidazole from N(2)-formyl-N(1)-(5-phospho-D-ribosyl)glycinamide: step 2/2. The polypeptide is Phosphoribosylformylglycinamidine cyclo-ligase (Brucella melitensis biotype 2 (strain ATCC 23457)).